Reading from the N-terminus, the 544-residue chain is Chaperonin GroEL (544 aa).

ATP is bound by residues 30–33 (TLGP), Lys-51, 87–91 (DGTTT), Gly-415, 479–481 (NAA), and Asp-495. A compositionally biased stretch (low complexity) spans 525-537 (PQDTPATAAAPDM). The disordered stretch occupies residues 525 to 544 (PQDTPATAAAPDMGGMGGMM).

Belongs to the chaperonin (HSP60) family. In terms of assembly, forms a cylinder of 14 subunits composed of two heptameric rings stacked back-to-back. Interacts with the co-chaperonin GroES.

The protein resides in the cytoplasm. The enzyme catalyses ATP + H2O + a folded polypeptide = ADP + phosphate + an unfolded polypeptide.. In terms of biological role, together with its co-chaperonin GroES, plays an essential role in assisting protein folding. The GroEL-GroES system forms a nano-cage that allows encapsulation of the non-native substrate proteins and provides a physical environment optimized to promote and accelerate protein folding. This Ruthia magnifica subsp. Calyptogena magnifica protein is Chaperonin GroEL.